The primary structure comprises 212 residues: Methylthioribulose-1-phosphate dehydratase (212 aa).

Residues His-97 and His-99 each coordinate Zn(2+).

This sequence belongs to the aldolase class II family. MtnB subfamily. As to quaternary structure, homotetramer. Zn(2+) is required as a cofactor.

It catalyses the reaction 5-(methylsulfanyl)-D-ribulose 1-phosphate = 5-methylsulfanyl-2,3-dioxopentyl phosphate + H2O. Its pathway is amino-acid biosynthesis; L-methionine biosynthesis via salvage pathway; L-methionine from S-methyl-5-thio-alpha-D-ribose 1-phosphate: step 2/6. Functionally, catalyzes the dehydration of methylthioribulose-1-phosphate (MTRu-1-P) into 2,3-diketo-5-methylthiopentyl-1-phosphate (DK-MTP-1-P). In Bacillus cereus (strain G9842), this protein is Methylthioribulose-1-phosphate dehydratase.